The following is a 75-amino-acid chain: Putative defensin-like protein 271 (75 aa).

The signal sequence occupies residues 1–23 (MTSMKLHIVALCIIVSFLVNVQS). 4 cysteine pairs are disulfide-bonded: C33–C72, C39–C61, C45–C70, and C49–C71.

This sequence belongs to the DEFL family.

The protein localises to the secreted. This is Putative defensin-like protein 271 from Arabidopsis thaliana (Mouse-ear cress).